The sequence spans 86 residues: Large ribosomal subunit protein bL27 (86 aa).

Residues 1-10 (MAQKKGGGST) show a composition bias toward gly residues. The tract at residues 1 to 21 (MAQKKGGGSTRNGRDSESKRL) is disordered.

The protein belongs to the bacterial ribosomal protein bL27 family.

The sequence is that of Large ribosomal subunit protein bL27 from Cupriavidus necator (strain ATCC 17699 / DSM 428 / KCTC 22496 / NCIMB 10442 / H16 / Stanier 337) (Ralstonia eutropha).